Here is a 262-residue protein sequence, read N- to C-terminus: Tryptophan synthase alpha chain (262 aa).

Active-site proton acceptor residues include E49 and D60.

It belongs to the TrpA family. As to quaternary structure, tetramer of two alpha and two beta chains.

It carries out the reaction (1S,2R)-1-C-(indol-3-yl)glycerol 3-phosphate + L-serine = D-glyceraldehyde 3-phosphate + L-tryptophan + H2O. It participates in amino-acid biosynthesis; L-tryptophan biosynthesis; L-tryptophan from chorismate: step 5/5. The alpha subunit is responsible for the aldol cleavage of indoleglycerol phosphate to indole and glyceraldehyde 3-phosphate. This Caldanaerobacter subterraneus subsp. tengcongensis (strain DSM 15242 / JCM 11007 / NBRC 100824 / MB4) (Thermoanaerobacter tengcongensis) protein is Tryptophan synthase alpha chain.